Consider the following 517-residue polypeptide: MTEPNRAQAPAQNKAAADTPAVDENKIIAERREKLAALRQQGVAFPNDFRPTHQAAALQAQYADTEQATLEAAPVEVAIAGRMMLKRVMGKASFATVQDGSGQIQFYITRDKVGEEVYAAFKHWDLGDIISARGELFRTNKGELSVQVRELRLLSKSLRPLPDKFHGLADQEMKYRQRYVDLIVSPETRNTFRARTDAISSLRRHMADAGFMEVETPMLHPIPGGAAAKPFITHHNALDMQMFLRIAPELYLKRLIVGGFERVFEINRNFRNEGVSPRHNPEFTMMEFYAAYTDYRWLMDFTEDLIRKAAIDARGSAVLTYQDRELDLSKPFHRLTICQAIQKFAPQYTDAQLADAEFLRTELKKFGVNTNAPQFLNAGLGTLQLVLFEETAESQLWEPTFIVDYPVEVSPLARASDTVPGITERFELFITGREIANGFSELNDAEDQADRFRKQVEQKDAGDEEAMYFDADYIRALEYGMPPTGGCGIGIDRLVMLLTDSPNIRDVILFPHLRKED.

Positions 1–21 are disordered; sequence MTEPNRAQAPAQNKAAADTPA. Positions 7–20 are enriched in low complexity; the sequence is AQAPAQNKAAADTP. Mg(2+) is bound by residues Glu-427 and Glu-434.

The protein belongs to the class-II aminoacyl-tRNA synthetase family. In terms of assembly, homodimer. Mg(2+) serves as cofactor.

It is found in the cytoplasm. The catalysed reaction is tRNA(Lys) + L-lysine + ATP = L-lysyl-tRNA(Lys) + AMP + diphosphate. In Cupriavidus taiwanensis (strain DSM 17343 / BCRC 17206 / CCUG 44338 / CIP 107171 / LMG 19424 / R1) (Ralstonia taiwanensis (strain LMG 19424)), this protein is Lysine--tRNA ligase.